Reading from the N-terminus, the 135-residue chain is ATP synthase epsilon chain, chloroplastic (135 aa).

It belongs to the ATPase epsilon chain family. As to quaternary structure, F-type ATPases have 2 components, CF(1) - the catalytic core - and CF(0) - the membrane proton channel. CF(1) has five subunits: alpha(3), beta(3), gamma(1), delta(1), epsilon(1). CF(0) has three main subunits: a, b and c.

It localises to the plastid. Its subcellular location is the chloroplast thylakoid membrane. In terms of biological role, produces ATP from ADP in the presence of a proton gradient across the membrane. This Euglena gracilis protein is ATP synthase epsilon chain, chloroplastic.